A 258-amino-acid chain; its full sequence is Imidazole glycerol phosphate synthase subunit HisF (258 aa).

Active-site residues include D11 and D130.

Belongs to the HisA/HisF family. In terms of assembly, heterodimer of HisH and HisF.

It localises to the cytoplasm. The catalysed reaction is 5-[(5-phospho-1-deoxy-D-ribulos-1-ylimino)methylamino]-1-(5-phospho-beta-D-ribosyl)imidazole-4-carboxamide + L-glutamine = D-erythro-1-(imidazol-4-yl)glycerol 3-phosphate + 5-amino-1-(5-phospho-beta-D-ribosyl)imidazole-4-carboxamide + L-glutamate + H(+). Its pathway is amino-acid biosynthesis; L-histidine biosynthesis; L-histidine from 5-phospho-alpha-D-ribose 1-diphosphate: step 5/9. Functionally, IGPS catalyzes the conversion of PRFAR and glutamine to IGP, AICAR and glutamate. The HisF subunit catalyzes the cyclization activity that produces IGP and AICAR from PRFAR using the ammonia provided by the HisH subunit. The polypeptide is Imidazole glycerol phosphate synthase subunit HisF (Bradyrhizobium sp. (strain ORS 278)).